Here is a 460-residue protein sequence, read N- to C-terminus: 3-isopropylmalate dehydratase large subunit (460 aa).

The [4Fe-4S] cluster site is built by Cys-338, Cys-398, and Cys-401.

The protein belongs to the aconitase/IPM isomerase family. LeuC type 1 subfamily. In terms of assembly, heterodimer of LeuC and LeuD. It depends on [4Fe-4S] cluster as a cofactor.

The enzyme catalyses (2R,3S)-3-isopropylmalate = (2S)-2-isopropylmalate. Its pathway is amino-acid biosynthesis; L-leucine biosynthesis; L-leucine from 3-methyl-2-oxobutanoate: step 2/4. Functionally, catalyzes the isomerization between 2-isopropylmalate and 3-isopropylmalate, via the formation of 2-isopropylmaleate. The protein is 3-isopropylmalate dehydratase large subunit of Streptococcus sanguinis (strain SK36).